We begin with the raw amino-acid sequence, 146 residues long: Large ribosomal subunit protein uL15 (146 aa).

The segment at 1 to 51 (MKLHELQPAPGSRKKAVRVGRGIGSGNGKTSGRGQKGQNARSGGGVRLGFE) is disordered. 2 stretches are compositionally biased toward gly residues: residues 21–35 (RGIG…GRGQ) and 42–51 (SGGGVRLGFE).

The protein belongs to the universal ribosomal protein uL15 family. As to quaternary structure, part of the 50S ribosomal subunit.

In terms of biological role, binds to the 23S rRNA. This chain is Large ribosomal subunit protein uL15, found in Geobacillus kaustophilus (strain HTA426).